The primary structure comprises 297 residues: 4-hydroxy-tetrahydrodipicolinate synthase (297 aa).

Position 49 (Thr-49) interacts with pyruvate. Residue Tyr-137 is the Proton donor/acceptor of the active site. Residue Lys-166 is the Schiff-base intermediate with substrate of the active site. Pyruvate is bound at residue Ile-208.

This sequence belongs to the DapA family. Homotetramer; dimer of dimers.

The protein resides in the cytoplasm. The catalysed reaction is L-aspartate 4-semialdehyde + pyruvate = (2S,4S)-4-hydroxy-2,3,4,5-tetrahydrodipicolinate + H2O + H(+). The protein operates within amino-acid biosynthesis; L-lysine biosynthesis via DAP pathway; (S)-tetrahydrodipicolinate from L-aspartate: step 3/4. Catalyzes the condensation of (S)-aspartate-beta-semialdehyde [(S)-ASA] and pyruvate to 4-hydroxy-tetrahydrodipicolinate (HTPA). The chain is 4-hydroxy-tetrahydrodipicolinate synthase from Chlorobium phaeobacteroides (strain BS1).